We begin with the raw amino-acid sequence, 341 residues long: Adhesion protein Bd37 (341 aa).

Residues 1-21 (MKTSKILNTAAICLLAMGFNG) form the signal peptide. Residues Asn23 and Asn30 are each glycosylated (N-linked (GlcNAc...) asparagine). Cys26 and Cys307 are oxidised to a cystine. Residues 36–75 (AAANPVVSTPGNDAQQAGTQQGGANSKSVPEQQPQQAAGE) form a disordered region. A compositionally biased stretch (low complexity) spans 49–59 (AQQAGTQQGGA). Polar residues predominate over residues 60-75 (NSKSVPEQQPQQAAGE). A lipid anchor (GPI-anchor amidated serine) is attached at Ser311. The propeptide at 312–341 (GQGSSPKKPSFAAVPSSLSAIVFGIIVSMF) is removed in mature form.

In terms of processing, the signal sequence is cleaved. Glycosylated. Post-translationally, palmitoylated. In terms of processing, not myristoylated.

It is found in the cell membrane. It localises to the secreted. Its subcellular location is the vesicle. Functionally, binds to host erythrocytes. This Babesia divergens protein is Adhesion protein Bd37.